Reading from the N-terminus, the 269-residue chain is MEDKNSVIVFKNVSFQYQSDASFTLKDVSFNIPKGQWTSIVGHNGSGKSTIAKLMIGIEKVKSGEIFYNNQAITDDNFEKLRKDIGIVFQNPDNQFVGSIVKYDVAFGLENHAVPYDEMHRRVSEALKQVDMLERADYEPNALSGGQKQRVAIASVLALNPSVIILDEATSMLDPDARQNLLDLVRKVKSEHNITIISITHDLSEAMEADHVIVMNKGTVYKEGTATEIFDNAEELTRIGLDLPFPIKINQMLGHQTSFLTYEGLVDQL.

The ABC transporter domain occupies 8-242; it reads IVFKNVSFQY…AEELTRIGLD (235 aa). 42–49 lines the ATP pocket; it reads GHNGSGKS.

Belongs to the ABC transporter superfamily. Energy-coupling factor EcfA family. Forms a stable energy-coupling factor (ECF) transporter complex composed of 2 membrane-embedded substrate-binding proteins (S component), 2 ATP-binding proteins (A component) and 2 transmembrane proteins (T component).

It localises to the cell membrane. In terms of biological role, ATP-binding (A) component of a common energy-coupling factor (ECF) ABC-transporter complex. Unlike classic ABC transporters this ECF transporter provides the energy necessary to transport a number of different substrates. This Staphylococcus aureus (strain USA300) protein is Energy-coupling factor transporter ATP-binding protein EcfA1.